A 340-amino-acid chain; its full sequence is Phenylalanine--tRNA ligase alpha subunit (340 aa).

Glu-255 serves as a coordination point for Mg(2+).

This sequence belongs to the class-II aminoacyl-tRNA synthetase family. Phe-tRNA synthetase alpha subunit type 1 subfamily. In terms of assembly, tetramer of two alpha and two beta subunits. Mg(2+) serves as cofactor.

The protein localises to the cytoplasm. It carries out the reaction tRNA(Phe) + L-phenylalanine + ATP = L-phenylalanyl-tRNA(Phe) + AMP + diphosphate + H(+). The polypeptide is Phenylalanine--tRNA ligase alpha subunit (Desulforamulus reducens (strain ATCC BAA-1160 / DSM 100696 / MI-1) (Desulfotomaculum reducens)).